Consider the following 394-residue polypeptide: Elongation factor Tu (394 aa).

The tr-type G domain occupies Lys-10–Glu-204. Residues Gly-19–Thr-26 are G1. Gly-19–Thr-26 provides a ligand contact to GTP. Residue Thr-26 participates in Mg(2+) binding. The segment at Gly-60–Asn-64 is G2. Residues Asp-81–Gly-84 are G3. GTP contacts are provided by residues Asp-81–His-85 and Asn-136–Asp-139. The tract at residues Asn-136–Asp-139 is G4. Residues Ser-174–Leu-176 are G5.

Belongs to the TRAFAC class translation factor GTPase superfamily. Classic translation factor GTPase family. EF-Tu/EF-1A subfamily. As to quaternary structure, monomer.

The protein localises to the cytoplasm. It carries out the reaction GTP + H2O = GDP + phosphate + H(+). GTP hydrolase that promotes the GTP-dependent binding of aminoacyl-tRNA to the A-site of ribosomes during protein biosynthesis. The polypeptide is Elongation factor Tu (Chlamydia pneumoniae (Chlamydophila pneumoniae)).